Consider the following 209-residue polypeptide: Glutathione S-transferase D1 (209 aa).

The GST N-terminal domain maps to 1–81; the sequence is MVDFYYLPGS…YLVEKYGKTD (81 aa). Residues S10, 51-53, and 65-67 contribute to the glutathione site; these read HTI and ESR. Positions 87–208 constitute a GST C-terminal domain; sequence CPKKRAVINQ…AGCLEFKKYF (122 aa).

The protein belongs to the GST superfamily. Delta family. As to quaternary structure, homodimer.

It catalyses the reaction RX + glutathione = an S-substituted glutathione + a halide anion + H(+). It carries out the reaction 1,1,1-trichloro-2,2-bis(4-chlorophenyl)ethane = 1,1-dichloro-2,2-bis(4-chlorophenyl)ethylene + chloride + H(+). Its function is as follows. Conjugation of reduced glutathione to a wide number of exogenous and endogenous hydrophobic electrophiles. Has DDT dehydrochlorinase activity. May be involved in detoxification. This Drosophila melanogaster (Fruit fly) protein is Glutathione S-transferase D1.